The following is an 813-amino-acid chain: Striatin-interacting protein 1 homolog (813 aa).

Disordered regions lie at residues 1–41 (MDGV…SEAP) and 307–379 (RAAS…RDEV). A compositionally biased stretch (polar residues) spans 9 to 18 (NNKQKQNQML). Positions 22–35 (MRGEFTRNQRKDSE) are enriched in basic and acidic residues. Low complexity predominate over residues 307–316 (RAASPPASAS). Ser310 carries the phosphoserine modification. Positions 331 to 352 (KALIKQDNLDTFNEKDPYKADD) are enriched in basic and acidic residues. A compositionally biased stretch (acidic residues) spans 353 to 367 (SHEDEEENDDNDNSL).

This sequence belongs to the STRIP family. Part of the core of STRIPAK complexes composed of PP2A catalytic and scaffolding subunits, the striatins (PP2A regulatory subunits), the striatin-associated proteins MOB4, STRIP1 and STRIP2, PDCD10 and members of the STE20 kinases, such as STK24 and STK26.

The protein localises to the cytoplasm. Its function is as follows. Plays a role in the regulation of cell morphology and cytoskeletal organization. Required in the cortical actin filament dynamics and cell shape. Part of the striatin-interacting phosphatase and kinase (STRIPAK) complexes. STRIPAK complexes have critical roles in protein (de)phosphorylation and are regulators of multiple signaling pathways including Hippo, MAPK, nuclear receptor and cytoskeleton remodeling. Different types of STRIPAK complexes are involved in a variety of biological processes such as cell growth, differentiation, apoptosis, metabolism and immune regulation. This Danio rerio (Zebrafish) protein is Striatin-interacting protein 1 homolog (strip1).